A 48-amino-acid chain; its full sequence is Glycine-rich RNA-binding protein 3 (48 aa).

The sequence is that of Glycine-rich RNA-binding protein 3 from Populus euphratica (Euphrates poplar).